A 441-amino-acid chain; its full sequence is Trigger factor (441 aa).

In terms of domain architecture, PPIase FKBP-type spans 163–248 (GDQVVFDFVG…IKEVKKPVPA (86 aa)).

This sequence belongs to the FKBP-type PPIase family. Tig subfamily.

It is found in the cytoplasm. The catalysed reaction is [protein]-peptidylproline (omega=180) = [protein]-peptidylproline (omega=0). Functionally, involved in protein export. Acts as a chaperone by maintaining the newly synthesized protein in an open conformation. Functions as a peptidyl-prolyl cis-trans isomerase. This Jannaschia sp. (strain CCS1) protein is Trigger factor.